Consider the following 66-residue polypeptide: Beta-defensin 107A (66 aa).

An N-terminal signal peptide occupies residues 1-22 (MKIFFFIFAALILLAQIFQART). 2 disulfides stabilise this stretch: C37-C51 and C41-C60.

It belongs to the beta-defensin family.

Its subcellular location is the secreted. Its function is as follows. Has antibacterial activity. In Macaca fascicularis (Crab-eating macaque), this protein is Beta-defensin 107A (DEFB107A).